Here is a 408-residue protein sequence, read N- to C-terminus: 1-deoxy-D-xylulose 5-phosphate reductoisomerase (408 aa).

NADPH is bound by residues T26, G27, S28, I29, and N143. Residue K144 coordinates 1-deoxy-D-xylulose 5-phosphate. Residue E145 participates in NADPH binding. D167 provides a ligand contact to Mn(2+). The 1-deoxy-D-xylulose 5-phosphate site is built by S168, E169, S193, and H216. E169 contributes to the Mn(2+) binding site. Residue G222 participates in NADPH binding. 4 residues coordinate 1-deoxy-D-xylulose 5-phosphate: S229, N234, K235, and E238. Residue E238 participates in Mn(2+) binding.

The protein belongs to the DXR family. It depends on Mg(2+) as a cofactor. The cofactor is Mn(2+).

It catalyses the reaction 2-C-methyl-D-erythritol 4-phosphate + NADP(+) = 1-deoxy-D-xylulose 5-phosphate + NADPH + H(+). Its pathway is isoprenoid biosynthesis; isopentenyl diphosphate biosynthesis via DXP pathway; isopentenyl diphosphate from 1-deoxy-D-xylulose 5-phosphate: step 1/6. Its function is as follows. Catalyzes the NADPH-dependent rearrangement and reduction of 1-deoxy-D-xylulose-5-phosphate (DXP) to 2-C-methyl-D-erythritol 4-phosphate (MEP). This chain is 1-deoxy-D-xylulose 5-phosphate reductoisomerase, found in Corynebacterium jeikeium (strain K411).